A 386-amino-acid chain; its full sequence is Palmitoyltransferase ZDHHC18 (386 aa).

A disordered region spans residues 1 to 65 (MKDCEYQQIS…GSGSLGRRPR (65 aa)). At 1 to 88 (MKDCEYQQIS…CGGRLMLAGH (88 aa)) the chain is on the cytoplasmic side. Serine 19 carries the phosphoserine modification. The span at 27 to 40 (PAAPPGPSPGPAPG) shows a compositional bias: pro residues. Positions 49-59 (SGSGSGSGSGS) are enriched in gly residues. Residues 89–109 (GGVFALTLLLILSTTILFFIF) form a helical membrane-spanning segment. Residues 110–117 (DCPYLART) are Lumenal-facing. Residues 118–138 (LTLAIPIIAAILFFFVMSCLL) form a helical membrane-spanning segment. At 139-233 (QTSFTDPGIL…GNCVGRRNYR (95 aa)) the chain is on the cytoplasmic side. The DHHC domain maps to 190–240 (KYCFTCKMFRPPRTSHCSVCDNCVERFDHHCPWVGNCVGRRNYRFFYAFIL). Cysteine 220 acts as the S-palmitoyl cysteine intermediate in catalysis. Residues 234–254 (FFYAFILSLSFLTAFIFACVV) form a helical membrane-spanning segment. The Lumenal segment spans residues 255–275 (THLTLLSQGSNFLSALNKTPA). Residues 276-296 (GVLELVICFFSIWSILGLSGF) form a helical membrane-spanning segment. The Cytoplasmic segment spans residues 297–386 (HTYLVASNLT…PDASMVGGHP (90 aa)). The interval 362 to 386 (LPSPIRSDEPACGAKPDASMVGGHP) is disordered.

Belongs to the DHHC palmitoyltransferase family. ERF2/ZDHHC9 subfamily.

Its subcellular location is the golgi apparatus membrane. The enzyme catalyses L-cysteinyl-[protein] + hexadecanoyl-CoA = S-hexadecanoyl-L-cysteinyl-[protein] + CoA. In terms of biological role, palmitoyltransferase that catalyzes the addition of palmitate onto various protein substrates, such as CGAS, HRAS and LCK. Acts as a negative regulator of the cGAS-STING pathway be mediating palmitoylation and inactivation of CGAS. May also have a palmitoyltransferase activity toward the beta-2 adrenergic receptor/ADRB2 and therefore regulate G protein-coupled receptor signaling. The sequence is that of Palmitoyltransferase ZDHHC18 from Rattus norvegicus (Rat).